The primary structure comprises 169 residues: Protein-export protein SecB (169 aa).

This sequence belongs to the SecB family. Homotetramer, a dimer of dimers. One homotetramer interacts with 1 SecA dimer.

Its subcellular location is the cytoplasm. Its function is as follows. One of the proteins required for the normal export of preproteins out of the cell cytoplasm. It is a molecular chaperone that binds to a subset of precursor proteins, maintaining them in a translocation-competent state. It also specifically binds to its receptor SecA. This is Protein-export protein SecB from Haemophilus influenzae (strain 86-028NP).